Here is a 226-residue protein sequence, read N- to C-terminus: uncharacterized protein (226 aa).

Residues 75–226 enclose the N-acetyltransferase domain; that stretch reads YTIRNVTKDD…KGWLRMVKRI (152 aa).

It belongs to the acetyltransferase family.

This is an uncharacterized protein from Methanocaldococcus jannaschii (strain ATCC 43067 / DSM 2661 / JAL-1 / JCM 10045 / NBRC 100440) (Methanococcus jannaschii).